We begin with the raw amino-acid sequence, 122 residues long: MIQQETRLKVADNSGAREVLTIKVLGGSGRKTANIGDVIVCTVKQATPGGVVKKGEVVRAVIVRTKSGARRTDGSYISFDENACVIIRDDKSPRGTRIFGPVARELRENNFMKIVSLAPEVI.

Belongs to the universal ribosomal protein uL14 family. As to quaternary structure, part of the 50S ribosomal subunit. Forms a cluster with proteins L3 and L19. In the 70S ribosome, L14 and L19 interact and together make contacts with the 16S rRNA in bridges B5 and B8.

Its function is as follows. Binds to 23S rRNA. Forms part of two intersubunit bridges in the 70S ribosome. This is Large ribosomal subunit protein uL14 from Bacillus velezensis (strain DSM 23117 / BGSC 10A6 / LMG 26770 / FZB42) (Bacillus amyloliquefaciens subsp. plantarum).